The chain runs to 351 residues: MRKIIHVDMDCFFAAVEMRDNPALRDIPIAIGGSRERRGVISTANYPARKFGVRSAMPTGMALKLCPHLTLLPGRFDAYKEASNHIREIFSRYTSRIEPLSLDEAYLDVTDSVHCHGSATLIAQEIRQTIFNELQLTASAGVAPVKFLAKIASDMNKPNGQFVITPAEVPAFLQTLPLAKIPGVGKVSAAKLEAMGLRTCGDVQKCDLVTLLKRFGKFGRILWERSQGIDERDVNSERLRKSVGVERTMAEDIHHWSECEAIIERLYPELERRLAKVKPDLLIARQGVKLKFDDFQQTTQEHVWPRLNKSDLIATARKTWDERRGGRGVRLVGLHVTLLDPQMERQLVLGL.

Residues 4–185 enclose the UmuC domain; that stretch reads IIHVDMDCFF…LPLAKIPGVG (182 aa). Residues Asp8 and Asp103 each contribute to the Mg(2+) site. The active site involves Glu104.

The protein belongs to the DNA polymerase type-Y family. As to quaternary structure, monomer. Requires Mg(2+) as cofactor.

The protein resides in the cytoplasm. It carries out the reaction DNA(n) + a 2'-deoxyribonucleoside 5'-triphosphate = DNA(n+1) + diphosphate. In terms of biological role, poorly processive, error-prone DNA polymerase involved in untargeted mutagenesis. Copies undamaged DNA at stalled replication forks, which arise in vivo from mismatched or misaligned primer ends. These misaligned primers can be extended by PolIV. Exhibits no 3'-5' exonuclease (proofreading) activity. May be involved in translesional synthesis, in conjunction with the beta clamp from PolIII. In Escherichia coli O1:K1 / APEC, this protein is DNA polymerase IV.